Reading from the N-terminus, the 159-residue chain is Ribosomal RNA large subunit methyltransferase H (159 aa).

S-adenosyl-L-methionine contacts are provided by residues Leu76, Gly108, and 127-132; that span reads FSKMTF.

It belongs to the RNA methyltransferase RlmH family. As to quaternary structure, homodimer.

It localises to the cytoplasm. The enzyme catalyses pseudouridine(1915) in 23S rRNA + S-adenosyl-L-methionine = N(3)-methylpseudouridine(1915) in 23S rRNA + S-adenosyl-L-homocysteine + H(+). In terms of biological role, specifically methylates the pseudouridine at position 1915 (m3Psi1915) in 23S rRNA. This Clostridium botulinum (strain Kyoto / Type A2) protein is Ribosomal RNA large subunit methyltransferase H.